The following is a 239-amino-acid chain: Ribosomal RNA small subunit methyltransferase G (239 aa).

Residues G77, F82, 128 to 129 (AE), and R147 each bind S-adenosyl-L-methionine. Residues 216-239 (EKKKQTPKKYPRKPGTPNKSPIEG) form a disordered region.

This sequence belongs to the methyltransferase superfamily. RNA methyltransferase RsmG family.

It localises to the cytoplasm. Functionally, specifically methylates the N7 position of guanine in position 535 of 16S rRNA. This Bacillus pumilus (strain SAFR-032) protein is Ribosomal RNA small subunit methyltransferase G.